Here is a 395-residue protein sequence, read N- to C-terminus: Flagellin D (395 aa).

It belongs to the bacterial flagellin family.

It is found in the secreted. Its subcellular location is the bacterial flagellum. Its function is as follows. Flagellin is the subunit protein which polymerizes to form the filaments of bacterial flagella. This Rhizobium meliloti (Ensifer meliloti) protein is Flagellin D (flaD).